A 349-amino-acid chain; its full sequence is MALPDFSMRQLLEAGAHFGHQAHRWNPKMQSYIFGTRNNIHIIDLAQTVPALYQALQAVSDTVAKGGRVLFVGTKRQAADVVAESARRSAQYFVNSRWLGGTLTNWKTISGSIQRLRKVDEILAGGGQGLTKKERLMLSREKDKLEKALGGIKDMGGVPDLLFVIDTNKEQLAIKEAKRLGIPVAAIVDTNSDPDGITYVVPANDDAGRAIALYCDLIARAAIDGISRGQGALGMDLGASEEPLAEELPANLNEPEVAHLDIAEPYVGEPFELLAAPRGAPDDLTKLTGVGPQLVQKLNDAGIYHYWQIAAMAPEDVAKVDSELKLNGRIERDGWINQARAFVEAAAAA.

Belongs to the universal ribosomal protein uS2 family.

This Methylobacterium nodulans (strain LMG 21967 / CNCM I-2342 / ORS 2060) protein is Small ribosomal subunit protein uS2.